Reading from the N-terminus, the 312-residue chain is F-box protein At1g11270 (312 aa).

The F-box domain maps to 29-80; it reads SVVKLLLPHDVVGLILERLPVESLLRFKCVSNQWKSTIESQCFQERQLIRRM.

The protein is F-box protein At1g11270 of Arabidopsis thaliana (Mouse-ear cress).